The primary structure comprises 119 residues: uncharacterized protein (119 aa).

A coiled-coil region spans residues 6-36 (QAYLDIQGKIAEFRREIKALRVEEKAITANL). The segment at 95–119 (AVTGSSSNVKIRKSAPARNEEDDDG) is disordered.

This is an uncharacterized protein from Frog virus 3 (isolate Goorha) (FV-3).